The following is a 106-amino-acid chain: L-rhamnose mutarotase (106 aa).

Tyrosine 20 contributes to the substrate binding site. The active-site Proton donor is histidine 24. Substrate-binding positions include tyrosine 43 and 78-79 (WW).

Belongs to the rhamnose mutarotase family. Homodimer.

It localises to the cytoplasm. The catalysed reaction is alpha-L-rhamnose = beta-L-rhamnose. The protein operates within carbohydrate degradation; L-rhamnose degradation. Functionally, involved in the anomeric conversion of L-rhamnose. This is L-rhamnose mutarotase (rhaM) from Rhizobium leguminosarum bv. trifolii.